A 238-amino-acid polypeptide reads, in one-letter code: Ribonuclease PH (238 aa).

Phosphate is bound by residues arginine 86 and 124–126 (GTR).

Belongs to the RNase PH family. In terms of assembly, homohexameric ring arranged as a trimer of dimers.

The catalysed reaction is tRNA(n+1) + phosphate = tRNA(n) + a ribonucleoside 5'-diphosphate. In terms of biological role, phosphorolytic 3'-5' exoribonuclease that plays an important role in tRNA 3'-end maturation. Removes nucleotide residues following the 3'-CCA terminus of tRNAs; can also add nucleotides to the ends of RNA molecules by using nucleoside diphosphates as substrates, but this may not be physiologically important. Probably plays a role in initiation of 16S rRNA degradation (leading to ribosome degradation) during starvation. The protein is Ribonuclease PH of Chelativorans sp. (strain BNC1).